The primary structure comprises 185 residues: Ribosome-recycling factor (185 aa).

The protein belongs to the RRF family.

Its subcellular location is the cytoplasm. Responsible for the release of ribosomes from messenger RNA at the termination of protein biosynthesis. May increase the efficiency of translation by recycling ribosomes from one round of translation to another. In Idiomarina loihiensis (strain ATCC BAA-735 / DSM 15497 / L2-TR), this protein is Ribosome-recycling factor.